The sequence spans 516 residues: Circadian clock oscillator protein KaiC (516 aa).

KaiC domains are found at residues 1–244 (MNQP…INIF) and 258–516 (ARIS…TLPE). ATP is bound by residues G46, T47, G48, K49, T50, L51, S86, K221, L222, R223, T225, H227, T237, T287, G288, T289, G290, K291, T292, and L293. T50 lines the Mg(2+) pocket. Mg(2+) is bound at residue T292. E315 is a binding site for Mg(2+). W328 is a binding site for ATP. Phosphoserine; by autocatalysis is present on S428. T429 carries the post-translational modification Phosphothreonine; by autocatalysis. The ATP site is built by R448, K454, M455, R456, S458, H460, and K462.

Belongs to the KaiC family. In terms of assembly, homohexamer; hexamerization is dependent on ATP-binding. The KaiABC complex composition changes during the circadian cycle to control KaiC phosphorylation. Complexes KaiC(6), KaiA(2-4):KaiC(6), KaiB(6):KaiC(6) and KaiC(6):KaiB(6):KaiA(12) are among the most important forms, many form cooperatively. KaiC interacts with SasA, activating its autokinase function and leading to RpaA activation. The cofactor is Mg(2+). Phosphorylated on serine and threonine residues by autocatalysis. Has a 4 step phosphorylation cycle; the autokinase acts first on Thr-429, then Ser-428. When Ser-428 is modified KaiC switches to an autophosphatase mode, acting first on phospho-Thr-429 then phospho-Ser-428.

The enzyme catalyses L-seryl-[protein] + ATP = O-phospho-L-seryl-[protein] + ADP + H(+). The catalysed reaction is L-threonyl-[protein] + ATP = O-phospho-L-threonyl-[protein] + ADP + H(+). It carries out the reaction ATP + H2O = ADP + phosphate + H(+). The interaction with KaiA enhances its phosphorylation status, while the interaction with KaiB decreases it. Functionally, central component of the KaiABC oscillator complex, which constitutes the main circadian regulator in cyanobacteria. Complex composition changes during the circadian cycle to control KaiC phosphorylation. KaiA stimulates KaiC autophosphorylation, while KaiB sequesters KaiA, leading to KaiC autodephosphorylation. Clock output pathways impact the RpaA transcriptional regulator. KaiC enhances the autophosphorylation activity of SasA, which then transfers its phosphate group to RpaA to activate it. KaiB and KaiC together enhance the phospho-RpaA dephosphatase activity of CikA. Has a weak, temperature-independent ATPase activity; ATPase activity defines the circadian period. The phosphorylation state of KaiC modulates its ATPase activity and effects KaiB binding. The sequence is that of Circadian clock oscillator protein KaiC from Picosynechococcus sp. (strain ATCC 27264 / PCC 7002 / PR-6) (Agmenellum quadruplicatum).